The sequence spans 574 residues: Actin-binding protein wsp1 (574 aa).

Residues 19–130 form the WH1 domain; it reads IPKSTNKIIA…KKVLDKGCHP (112 aa). Disordered stretches follow at residues 144-186, 221-494, and 517-574; these read KGSS…ELLN, AGTP…IAEL, and KSRK…DEWD. A compositionally biased stretch (polar residues) spans 149–158; the sequence is HAPNNSNIQP. Pro residues-rich tracts occupy residues 230 to 240 and 251 to 260; these read PPIPPSIPSSR and PAPPPIPPPS. Composition is skewed to low complexity over residues 297–306 and 324–335; these read SRVSAAALAA and KPPIGNGSSNSS. The segment covering 352–368 has biased composition (pro residues); that stretch reads PLPPQGRSAPPPPPPRS. Ser386 bears the Phosphoserine mark. Positions 415-485 are enriched in pro residues; the sequence is PPVPTPPSLP…PPPAPAPAPA (71 aa). The WH2 domain maps to 499–518; sequence GRANLMASIRASGGMDLLKS. The span at 521-545 shows a compositional bias: polar residues; it reads VSASPSVASTKTSNPPVEAPPSNNL. Over residues 563 to 574 the composition is skewed to acidic residues; the sequence is SDEEDEDDDEWD.

Interacts with vrp1.

It is found in the cytoplasm. Its subcellular location is the cytoskeleton. Its function is as follows. Has a role in regulating actin assembly, so regulating polarized growth. The sequence is that of Actin-binding protein wsp1 (wsp1) from Schizosaccharomyces pombe (strain 972 / ATCC 24843) (Fission yeast).